A 308-amino-acid polypeptide reads, in one-letter code: Mycothiol acetyltransferase (308 aa).

N-acetyltransferase domains follow at residues 8–155 and 160–308; these read RDVD…PRLR and VQVR…RRAR. 1D-myo-inositol 2-(L-cysteinylamino)-2-deoxy-alpha-D-glucopyranoside is bound at residue Glu39. 84–86 lines the acetyl-CoA pocket; the sequence is LVV. The 1D-myo-inositol 2-(L-cysteinylamino)-2-deoxy-alpha-D-glucopyranoside site is built by Glu187, Lys226, and Glu240. Residues 244–246 and 251–257 contribute to the acetyl-CoA site; these read LGI and QGLGLGR. Residue Tyr278 participates in 1D-myo-inositol 2-(L-cysteinylamino)-2-deoxy-alpha-D-glucopyranoside binding.

The protein belongs to the acetyltransferase family. MshD subfamily. Monomer.

The enzyme catalyses 1D-myo-inositol 2-(L-cysteinylamino)-2-deoxy-alpha-D-glucopyranoside + acetyl-CoA = mycothiol + CoA + H(+). In terms of biological role, catalyzes the transfer of acetyl from acetyl-CoA to desacetylmycothiol (Cys-GlcN-Ins) to form mycothiol. This Geodermatophilus obscurus (strain ATCC 25078 / DSM 43160 / JCM 3152 / CCUG 61914 / KCC A-0152 / KCTC 9177 / NBRC 13315 / NRRL B-3577 / G-20) protein is Mycothiol acetyltransferase.